The chain runs to 203 residues: uncharacterized protein (203 aa).

Residues 1-23 (MKKIYKALISSLLLSTSINVAYA) form the signal peptide. The SH3b domain occupies 24-87 (ETQYVTENLS…ILNSDLSSTP (64 aa)). Residues 167-189 (IAIQWFIYGGSVLGVGLLFGLLI) form a helical membrane-spanning segment.

This sequence to E.coli YgiM.

It localises to the membrane. This is an uncharacterized protein from Haemophilus influenzae (strain ATCC 51907 / DSM 11121 / KW20 / Rd).